The sequence spans 280 residues: Acetylglutamate kinase (280 aa).

Substrate contacts are provided by residues 57–58, Arg79, and Asn174; that span reads GG.

The protein belongs to the acetylglutamate kinase family. ArgB subfamily.

The protein resides in the cytoplasm. It carries out the reaction N-acetyl-L-glutamate + ATP = N-acetyl-L-glutamyl 5-phosphate + ADP. The protein operates within amino-acid biosynthesis; L-arginine biosynthesis; N(2)-acetyl-L-ornithine from L-glutamate: step 2/4. Catalyzes the ATP-dependent phosphorylation of N-acetyl-L-glutamate. The polypeptide is Acetylglutamate kinase (Helicobacter hepaticus (strain ATCC 51449 / 3B1)).